The chain runs to 501 residues: Type II secretion system protein E (501 aa).

262–269 (GPTGSGKS) serves as a coordination point for ATP. Residues cysteine 395, cysteine 398, cysteine 428, and cysteine 431 each coordinate Zn(2+).

The protein belongs to the GSP E family. Forms homooligomers; most probably hexamers. Interacts with ExeL/GspL. Requires Zn(2+) as cofactor.

It is found in the cell inner membrane. The enzyme catalyses ATP + H2O + cellular proteinSide 1 = ADP + phosphate + cellular proteinSide 2.. In terms of biological role, ATPase component of the type II secretion system required for the energy-dependent secretion of extracellular factors such as proteases and toxins from the periplasm. Acts as a molecular motor to provide the energy that is required for assembly of the pseudopilus and the extrusion of substrates generated in the cytoplasm. The protein is Type II secretion system protein E (exeE) of Aeromonas hydrophila.